Consider the following 173-residue polypeptide: Crossover junction endodeoxyribonuclease RuvC (173 aa).

Catalysis depends on residues D8, E67, and D139. 3 residues coordinate Mg(2+): D8, E67, and D139.

This sequence belongs to the RuvC family. Homodimer which binds Holliday junction (HJ) DNA. The HJ becomes 2-fold symmetrical on binding to RuvC with unstacked arms; it has a different conformation from HJ DNA in complex with RuvA. In the full resolvosome a probable DNA-RuvA(4)-RuvB(12)-RuvC(2) complex forms which resolves the HJ. Mg(2+) serves as cofactor.

It localises to the cytoplasm. The enzyme catalyses Endonucleolytic cleavage at a junction such as a reciprocal single-stranded crossover between two homologous DNA duplexes (Holliday junction).. Functionally, the RuvA-RuvB-RuvC complex processes Holliday junction (HJ) DNA during genetic recombination and DNA repair. Endonuclease that resolves HJ intermediates. Cleaves cruciform DNA by making single-stranded nicks across the HJ at symmetrical positions within the homologous arms, yielding a 5'-phosphate and a 3'-hydroxyl group; requires a central core of homology in the junction. The consensus cleavage sequence is 5'-(A/T)TT(C/G)-3'. Cleavage occurs on the 3'-side of the TT dinucleotide at the point of strand exchange. HJ branch migration catalyzed by RuvA-RuvB allows RuvC to scan DNA until it finds its consensus sequence, where it cleaves and resolves the cruciform DNA. This chain is Crossover junction endodeoxyribonuclease RuvC, found in Pectobacterium carotovorum subsp. carotovorum (strain PC1).